A 425-amino-acid chain; its full sequence is Serine--tRNA ligase (425 aa).

230-232 (TAE) contributes to the L-serine binding site. 261–263 (RSE) is an ATP binding site. L-serine is bound at residue glutamate 284. 348–351 (EISS) contacts ATP. Serine 384 lines the L-serine pocket.

It belongs to the class-II aminoacyl-tRNA synthetase family. Type-1 seryl-tRNA synthetase subfamily. As to quaternary structure, homodimer. The tRNA molecule binds across the dimer.

It is found in the cytoplasm. The enzyme catalyses tRNA(Ser) + L-serine + ATP = L-seryl-tRNA(Ser) + AMP + diphosphate + H(+). The catalysed reaction is tRNA(Sec) + L-serine + ATP = L-seryl-tRNA(Sec) + AMP + diphosphate + H(+). It participates in aminoacyl-tRNA biosynthesis; selenocysteinyl-tRNA(Sec) biosynthesis; L-seryl-tRNA(Sec) from L-serine and tRNA(Sec): step 1/1. In terms of biological role, catalyzes the attachment of serine to tRNA(Ser). Is also able to aminoacylate tRNA(Sec) with serine, to form the misacylated tRNA L-seryl-tRNA(Sec), which will be further converted into selenocysteinyl-tRNA(Sec). The chain is Serine--tRNA ligase from Streptococcus pyogenes serotype M28 (strain MGAS6180).